The chain runs to 348 residues: Heat-inducible transcription repressor HrcA (348 aa).

This sequence belongs to the HrcA family.

Functionally, negative regulator of class I heat shock genes (grpE-dnaK-dnaJ and groELS operons). Prevents heat-shock induction of these operons. This Chlorobium chlorochromatii (strain CaD3) protein is Heat-inducible transcription repressor HrcA.